The following is a 261-amino-acid chain: Proline-rich protein HaeIII subfamily 1 (261 aa).

Positions 1–15 (MLVVLFTVALLALSS) are cleaved as a signal peptide. The disordered stretch occupies residues 15–261 (SAQGPREENQ…PPQGRPQGPR (247 aa)). 2 stretches are compositionally biased toward pro residues: residues 32-44 (QRPP…PRPP) and 51-237 (GPPP…PPTG). A compositionally biased stretch (low complexity) spans 238–261 (GPQQTPPLAGNTQGPPQGRPQGPR).

It is found in the secreted. The protein is Proline-rich protein HaeIII subfamily 1 (Prh1) of Mus musculus (Mouse).